The sequence spans 370 residues: MSEVTHRTKTRPVKVGPLTIGGNNEVVIQSMATTKTHDVEATVAEIKRLEEAGCQIVRVACPDERAANAIADIKKQINIPLVVDIHFDYKLALKAIEAGADKIRINPGNIGRREKVEAVVKAAKEKGIPIRIGVNAGSLEKKILDKYGYPTADGMVESALHHIKILEDLDFHDIIVSMKASDVNLAIEAYEKAAKAFDYPLHLGITESGTLFAGTVKSAAGLGAILNMGIGNTLRISLSADPVEEVKVARELLKSFGLAANAATLISCPTCGRIEIDLISIANEVEEYISTIKAPIKVAVLGCAVNGPGEAREADIGIAGARGEGLLFRKGEIVRKVPEETMVEELKKEIDKIAEEHYAKMEAEKAKANA.

The [4Fe-4S] cluster site is built by cysteine 268, cysteine 271, cysteine 303, and glutamate 310.

Belongs to the IspG family. The cofactor is [4Fe-4S] cluster.

It catalyses the reaction (2E)-4-hydroxy-3-methylbut-2-enyl diphosphate + oxidized [flavodoxin] + H2O + 2 H(+) = 2-C-methyl-D-erythritol 2,4-cyclic diphosphate + reduced [flavodoxin]. The protein operates within isoprenoid biosynthesis; isopentenyl diphosphate biosynthesis via DXP pathway; isopentenyl diphosphate from 1-deoxy-D-xylulose 5-phosphate: step 5/6. Its function is as follows. Converts 2C-methyl-D-erythritol 2,4-cyclodiphosphate (ME-2,4cPP) into 1-hydroxy-2-methyl-2-(E)-butenyl 4-diphosphate. The chain is 4-hydroxy-3-methylbut-2-en-1-yl diphosphate synthase (flavodoxin) from Bacillus pumilus (strain SAFR-032).